The chain runs to 285 residues: Mitochondrial substrate carrier family protein L (285 aa).

Residues 1-13 (MIASKETKEKIRN) are Mitochondrial intermembrane-facing. Solcar repeat units lie at residues 8–94 (KEKI…VKSK), 103–185 (ISLG…AQRY), and 193–282 (MTMG…VMKF). A helical transmembrane segment spans residues 14–34 (FIGGFASGAASTLAGHPFDTL). At 35–69 (KVRLQTEGSTGRFRGLAHCFTTTIKEEGFFALYKG) the chain is on the mitochondrial matrix side. A helical transmembrane segment spans residues 70-90 (VTPPLLGMSIINSCMFGAMNI). Residues 91–102 (VKSKIHTDKSTP) lie on the Mitochondrial intermembrane side of the membrane. The chain crosses the membrane as a helical span at residues 103 to 123 (ISLGEIMVSGAITGWIVSFVA). The Mitochondrial matrix portion of the chain corresponds to 124 to 156 (CPIETVKSKLQVQYTGVKLYNGPIDCIKKIGIR). A helical membrane pass occupies residues 157 to 177 (GLYKALIPTGFQRNSLYAYFG). At 178-198 (CYELAQRYLRREDGSMTMGRS) the chain is on the mitochondrial intermembrane side. A helical transmembrane segment spans residues 199–219 (FIAGGIAGTGFWLTNFPFDVI). The Mitochondrial matrix portion of the chain corresponds to 220-256 (RSRIMTMPYNESPPRYKGMIDCAKHIYRVDGLKGFWK). The helical transmembrane segment at 257–277 (GFSPCLLRTFPANGATFVAYE) threads the bilayer. Residues 278 to 285 (CVMKFFPM) are Mitochondrial intermembrane-facing.

Belongs to the mitochondrial carrier (TC 2.A.29) family.

It localises to the mitochondrion inner membrane. Functionally, mitochondrial solute carriers shuttle metabolites, nucleotides, and cofactors through the mitochondrial inner membrane. The chain is Mitochondrial substrate carrier family protein L (mcfL) from Dictyostelium discoideum (Social amoeba).